The following is a 406-amino-acid chain: 2,3-bisphosphoglycerate-independent phosphoglycerate mutase (406 aa).

The interval 164-184 (VSSNDPKKTGVQPKTIHPDDD) is disordered.

Belongs to the BPG-independent phosphoglycerate mutase family. A-PGAM subfamily.

It catalyses the reaction (2R)-2-phosphoglycerate = (2R)-3-phosphoglycerate. The protein operates within carbohydrate degradation; glycolysis; pyruvate from D-glyceraldehyde 3-phosphate: step 3/5. In terms of biological role, catalyzes the interconversion of 2-phosphoglycerate and 3-phosphoglycerate. This Methanocorpusculum labreanum (strain ATCC 43576 / DSM 4855 / Z) protein is 2,3-bisphosphoglycerate-independent phosphoglycerate mutase.